Consider the following 432-residue polypeptide: Adenylosuccinate synthetase (432 aa).

GTP contacts are provided by residues 12 to 18 (GDEGKGK) and 40 to 42 (GHT). Asp-13 functions as the Proton acceptor in the catalytic mechanism. Residues Asp-13 and Gly-40 each contribute to the Mg(2+) site. IMP is bound by residues 13–16 (DEGK), 38–41 (NAGH), Thr-130, Arg-144, Gln-225, Thr-240, and Arg-304. The active-site Proton donor is the His-41. Position 300–306 (300–306 (ATTGRPR)) interacts with substrate. Residues Arg-306, 332 to 334 (KLD), and 414 to 416 (SVG) contribute to the GTP site.

The protein belongs to the adenylosuccinate synthetase family. As to quaternary structure, homodimer. The cofactor is Mg(2+).

Its subcellular location is the cytoplasm. The catalysed reaction is IMP + L-aspartate + GTP = N(6)-(1,2-dicarboxyethyl)-AMP + GDP + phosphate + 2 H(+). It functions in the pathway purine metabolism; AMP biosynthesis via de novo pathway; AMP from IMP: step 1/2. Plays an important role in the de novo pathway of purine nucleotide biosynthesis. Catalyzes the first committed step in the biosynthesis of AMP from IMP. The protein is Adenylosuccinate synthetase of Anaeromyxobacter dehalogenans (strain 2CP-C).